The following is a 211-amino-acid chain: Recombination protein RecR (211 aa).

The C4-type zinc-finger motif lies at 70–85; sequence CRECFLITDREVCPIC. The Toprim domain maps to 93–190; it reads KFICVVEESQ…KITRTAYGFQ (98 aa).

This sequence belongs to the RecR family.

In terms of biological role, may play a role in DNA repair. It seems to be involved in an RecBC-independent recombinational process of DNA repair. It may act with RecF and RecO. The protein is Recombination protein RecR of Aquifex aeolicus (strain VF5).